The primary structure comprises 24 residues: Heptapoietin A light chain (24 aa).

As to quaternary structure, heterodimer of a heavy and a light chain linked by disulfide bond(s).

Its function is as follows. HPTA is an acidic heparin-binding growth factor for hepatocytes. This chain is Heptapoietin A light chain, found in Oryctolagus cuniculus (Rabbit).